Reading from the N-terminus, the 306-residue chain is Acetyl-coenzyme A carboxylase carboxyl transferase subunit beta (306 aa).

The 270-residue stretch at 25–294 folds into the CoA carboxyltransferase N-terminal domain; that stretch reads LWIKDPTSGE…APEPSHAFSK (270 aa). Positions 287 to 306 are disordered; that stretch reads EPSHAFSKDSQTQISKTKAA. A compositionally biased stretch (polar residues) spans 294-306; that stretch reads KDSQTQISKTKAA.

This sequence belongs to the AccD/PCCB family. As to quaternary structure, acetyl-CoA carboxylase is a heterohexamer composed of biotin carboxyl carrier protein (AccB), biotin carboxylase (AccC) and two subunits each of ACCase subunit alpha (AccA) and ACCase subunit beta (AccD).

The protein localises to the cytoplasm. The enzyme catalyses N(6)-carboxybiotinyl-L-lysyl-[protein] + acetyl-CoA = N(6)-biotinyl-L-lysyl-[protein] + malonyl-CoA. It functions in the pathway lipid metabolism; malonyl-CoA biosynthesis; malonyl-CoA from acetyl-CoA: step 1/1. Component of the acetyl coenzyme A carboxylase (ACC) complex. Biotin carboxylase (BC) catalyzes the carboxylation of biotin on its carrier protein (BCCP) and then the CO(2) group is transferred by the transcarboxylase to acetyl-CoA to form malonyl-CoA. The sequence is that of Acetyl-coenzyme A carboxylase carboxyl transferase subunit beta from Bartonella bacilliformis (strain ATCC 35685 / KC583 / Herrer 020/F12,63).